A 416-amino-acid chain; its full sequence is 5-hydroxytryptamine receptor 1A-beta (416 aa).

Over 1 to 35 the chain is Extracellular; sequence MEGTNNTTGWTHFDSTSNRTSKSFDEEVKLSYQVV. Residues Asn-5, Asn-6, and Asn-18 are each glycosylated (N-linked (GlcNAc...) asparagine). The helical transmembrane segment at 36–56 threads the bilayer; the sequence is TSFLLGALILCSIFGNACVVA. At 57–70 the chain is on the cytoplasmic side; it reads AIALERSLQNVANY. The helical transmembrane segment at 71-95 threads the bilayer; sequence LIGSLAVTDLMVSVLVLPMAALYQV. Over 96 to 104 the chain is Extracellular; the sequence is LNRWTLGQI. The helical transmembrane segment at 105–129 threads the bilayer; the sequence is PCDIFISLDMLCCTSSILHLCVIAL. Cys-106 and Cys-189 are joined by a disulfide. Serotonin contacts are provided by Asp-113 and Cys-117. The DRY motif; important for ligand-induced conformation changes motif lies at 130–132; it reads DRY. Over 130–149 the chain is Cytoplasmic; the sequence is DRYWAITEPIDYMKKRTPRR. Residues 150 to 171 traverse the membrane as a helical segment; that stretch reads AAVLISVTWLVGFSISIPPMLI. The Extracellular portion of the chain corresponds to 172-195; the sequence is MRSQPSSMAEDRANSKQCKITQDP. A helical transmembrane segment spans residues 196 to 218; the sequence is WYTIYSTFGAFYIPLTLMLVLYG. At 219–340 the chain is on the cytoplasmic side; it reads RIFKAARFRI…LARERKTVKT (122 aa). Residues Lys-339, Thr-340, and Gly-346 each contribute to the 1D-myo-inositol 4-phosphate site. The helical transmembrane segment at 341 to 364 threads the bilayer; it reads LGIIMGTFILCWLPFFIVALVMPF. The Extracellular segment spans residues 365 to 372; sequence CQESCFMP. Residues 373-397 traverse the membrane as a helical segment; the sequence is HWLKDVINWLGYSNSLLNPIIYAYF. Positions 390-394 match the NPxxY motif; important for ligand-induced conformation changes and signaling motif; sequence NPIIY. The 1D-myo-inositol 4-phosphate site is built by Phe-397, Asn-398, and Lys-399. Residues 398-416 lie on the Cytoplasmic side of the membrane; the sequence is NKDFQSAFKKIIKCHFCRA.

It belongs to the G-protein coupled receptor 1 family. 5-hydroxytryptamine receptor subfamily.

The protein localises to the cell membrane. G-protein coupled receptor activity is regulated by lipids: phosphatidylinositol 4-phosphate increases HTR1A-mediated activity. G-protein coupled receptor for 5-hydroxytryptamine (serotonin). Also functions as a receptor for various drugs and psychoactive substances. Ligand binding causes a conformation change that triggers signaling via guanine nucleotide-binding proteins (G proteins) and modulates the activity of downstream effectors, such as adenylate cyclase. HTR1A is coupled to G(i)/G(o) G alpha proteins and mediates inhibitory neurotransmission: signaling inhibits adenylate cyclase activity and activates a phosphatidylinositol-calcium second messenger system that regulates the release of Ca(2+) ions from intracellular stores. Beta-arrestin family members regulate signaling by mediating both receptor desensitization and resensitization processes. The protein is 5-hydroxytryptamine receptor 1A-beta (htr1a-B) of Takifugu rubripes (Japanese pufferfish).